A 602-amino-acid polypeptide reads, in one-letter code: Aspartate--tRNA(Asp/Asn) ligase (602 aa).

Glutamate 187 lines the L-aspartate pocket. Residues 211–214 (QQFK) form an aspartate region. Residues arginine 233 and histidine 461 each coordinate L-aspartate. 233 to 235 (RDE) is an ATP binding site. Glutamate 495 is an ATP binding site. An L-aspartate-binding site is contributed by arginine 502. An ATP-binding site is contributed by 547–550 (GLDR).

This sequence belongs to the class-II aminoacyl-tRNA synthetase family. Type 1 subfamily. In terms of assembly, homodimer.

It is found in the cytoplasm. The enzyme catalyses tRNA(Asx) + L-aspartate + ATP = L-aspartyl-tRNA(Asx) + AMP + diphosphate. Functionally, aspartyl-tRNA synthetase with relaxed tRNA specificity since it is able to aspartylate not only its cognate tRNA(Asp) but also tRNA(Asn). Reaction proceeds in two steps: L-aspartate is first activated by ATP to form Asp-AMP and then transferred to the acceptor end of tRNA(Asp/Asn). The sequence is that of Aspartate--tRNA(Asp/Asn) ligase from Chlorobium phaeovibrioides (strain DSM 265 / 1930) (Prosthecochloris vibrioformis (strain DSM 265)).